The chain runs to 139 residues: MSEEQQTVNIKKKEKWGVAHIYASYNNTIIHITDLTGAETISKWSGGMVVKADRDESSPYAAMIAARRAAEEAMEKGINGVHIKVRAPGGSKSKNPGPGAQAAIRALARAGLRIGRVEDVTPIPHDGTRPKGGRRGRRV.

Residues 118-139 (EDVTPIPHDGTRPKGGRRGRRV) form a disordered region.

It belongs to the universal ribosomal protein uS11 family. Part of the 30S ribosomal subunit.

Functionally, located on the platform of the 30S subunit. In Thermococcus sibiricus (strain DSM 12597 / MM 739), this protein is Small ribosomal subunit protein uS11.